The sequence spans 555 residues: MSEAEARPTNFIRQIIDEDLASGKHTTIHTRFPPEPNGYLHIGHAKSICLNFGIAQDYQGLCNLRFDDTNPVKEDIEYVDSIKNDVEWLGFHWAGNVCYSSDYFDQLHAYAVELITKGLAYVDELTPDQIREYRGTLKEPGKNSPFRDRSVEENLALFEKMRTGGFEEGKACLRAKIDMASPFIVMRDPVLYRIKFAEHHQTGNKWCIYPMYDFTHCISDALEGITHSLCTLEFQDNRRLYDWVLDNITIPVHPRQYEFSRLNLEYTVMSKRKLNLLVTDKHVEGWDDPRMPTISGLRRRGYTAASIREFCKRIGVTKQDNTIEMASLESCIREDLNENAPRAMAVIDPVKLVIENYPQGESEMVTMPNHPNKPEMGSREVPFSGEIWIDRADFREEANKQYKRLVMGKEVRLRNAYVVKAERVEKDAEGNITTIFCTYDADTLSKDPADGRKVKGVIHWVSAAHALPVEIRLYDRLFSVPNPGAAEDFLSVINPESLVIKQGYAEPSLQNAVAGKAYQFEREGYFCLDSRYTTADKRVFNRTVGLRDTWAKAGE.

Positions 34–44 (PEPNGYLHIGH) match the 'HIGH' region motif. ATP is bound by residues 35–37 (EPN) and 41–47 (HIGHAKS). Asp-67 and Tyr-212 together coordinate L-glutamine. ATP-binding positions include Thr-231, 261 to 262 (RL), and 269 to 271 (MSK). The 'KMSKS' region signature appears at 268–272 (VMSKR). Residues 317-324 (TKQDNTIE) are interaction with tRNA.

The protein belongs to the class-I aminoacyl-tRNA synthetase family. As to quaternary structure, monomer.

It localises to the cytoplasm. It carries out the reaction tRNA(Gln) + L-glutamine + ATP = L-glutaminyl-tRNA(Gln) + AMP + diphosphate. This Citrobacter koseri (strain ATCC BAA-895 / CDC 4225-83 / SGSC4696) protein is Glutamine--tRNA ligase.